Reading from the N-terminus, the 247-residue chain is Geranylgeranylglyceryl phosphate synthase (247 aa).

Mg(2+) contacts are provided by aspartate 23 and serine 52. Sn-glycerol 1-phosphate contacts are provided by residues 171-177, 203-204, and 225-226; these read YLEAGSG, GG, and GT.

Belongs to the GGGP/HepGP synthase family. Group II subfamily. Requires Mg(2+) as cofactor.

Its subcellular location is the cytoplasm. It catalyses the reaction sn-glycerol 1-phosphate + (2E,6E,10E)-geranylgeranyl diphosphate = sn-3-O-(geranylgeranyl)glycerol 1-phosphate + diphosphate. Its pathway is membrane lipid metabolism; glycerophospholipid metabolism. In terms of biological role, prenyltransferase that catalyzes the transfer of the geranylgeranyl moiety of geranylgeranyl diphosphate (GGPP) to the C3 hydroxyl of sn-glycerol-1-phosphate (G1P). This reaction is the first ether-bond-formation step in the biosynthesis of archaeal membrane lipids. The protein is Geranylgeranylglyceryl phosphate synthase of Methanococcoides burtonii (strain DSM 6242 / NBRC 107633 / OCM 468 / ACE-M).